We begin with the raw amino-acid sequence, 467 residues long: Chromosomal replication initiator protein DnaA (467 aa).

Positions 1-87 (MSSSLWLQCL…VGSRPVVAPK (87 aa)) are domain I, interacts with DnaA modulators. The tract at residues 87–130 (KPAPVRTAADVAAESSAPAQLAQRKPIHKTWDDDSAAADITHRS) is domain II. The domain III, AAA+ region stretch occupies residues 131-347 (NVNPKHKFNN…GALNRVIANA (217 aa)). ATP-binding residues include glycine 175, glycine 177, lysine 178, and threonine 179. The domain IV, binds dsDNA stretch occupies residues 348-467 (NFTGRPITID…YSNLIRTLSS (120 aa)).

It belongs to the DnaA family. Oligomerizes as a right-handed, spiral filament on DNA at oriC.

The protein resides in the cytoplasm. Plays an essential role in the initiation and regulation of chromosomal replication. ATP-DnaA binds to the origin of replication (oriC) to initiate formation of the DNA replication initiation complex once per cell cycle. Binds the DnaA box (a 9 base pair repeat at the origin) and separates the double-stranded (ds)DNA. Forms a right-handed helical filament on oriC DNA; dsDNA binds to the exterior of the filament while single-stranded (ss)DNA is stabiized in the filament's interior. The ATP-DnaA-oriC complex binds and stabilizes one strand of the AT-rich DNA unwinding element (DUE), permitting loading of DNA polymerase. After initiation quickly degrades to an ADP-DnaA complex that is not apt for DNA replication. Binds acidic phospholipids. This is Chromosomal replication initiator protein DnaA from Vibrio cholerae serotype O1 (strain ATCC 39315 / El Tor Inaba N16961).